The primary structure comprises 431 residues: Keratin, type I cytoskeletal 20 (431 aa).

The interval 1–23 (MDFSRQSFHRSLSSSSQGPALSM) is disordered. Positions 1–76 (MDFSRQSFHR…SNGSDLFGGN (76 aa)) are head. Ser-13 is modified (phosphoserine; by MAPKAPK2, MAPKAPK3 and PKC). 2 positions are modified to phosphoserine: Ser-16 and Ser-26. Residues 77–112 (GKLAMQNLNDRLANYLEKVRSLEQSNSRLEAQIKQW) form a coil 1A region. Residues 77–388 (GKLAMQNLND…RLLEGEDIKT (312 aa)) enclose the IF rod domain. The segment at 113-130 (YETNAPSTIRDYSSYYAQ) is linker 1. Residues 131-222 (IKELQNQVKD…KEHQEEVEVL (92 aa)) are coil 1B. The segment at 223–245 (RRQLGNNVNVEVDAAPGLNLGEI) is linker 12. A coil 2 region spans residues 246–384 (MNEMRQRYEV…ATYRRLLEGE (139 aa)). The tail stretch occupies residues 385–431 (DIKTTEYQLSTLEMKDIKKTRKIKTVVEEVVDGKVVSSEVKEIEESV).

Belongs to the intermediate filament family. In terms of assembly, heterotetramer of two type I and two type II keratins. Associates with KRT8. Hyperphosphorylation at Ser-13 occurs during the early stages of apoptosis but becomes less prominent during the later stages. Phosphorylation at Ser-13 also increases in response to stress brought on by cell injury. Post-translationally, proteolytically cleaved by caspases during apoptosis. Cleavage occurs at Asp-235. In terms of tissue distribution, expressed at low levels in the more differentiated suprabasal regions of the small intestine, and at higher levels in the colon, mainly in the upper region and in scattered cells throughout the remaining epithelium. Also expressed in epithelial cells of bladder, ileum and stomach and at lower levels in pancreas and earskin. The phosphorylated form is nearly exclusively expressed in goblet cells of the small intestine and in the lumen-proximal cells of the colon (at protein level). Also expressed in jejunum and duodenum.

In terms of biological role, plays a significant role in maintaining keratin filament organization in intestinal epithelia. When phosphorylated, plays a role in the secretion of mucin in the small intestine. The polypeptide is Keratin, type I cytoskeletal 20 (Mus musculus (Mouse)).